Consider the following 646-residue polypeptide: Threonine--tRNA ligase (646 aa).

The TGS domain maps to 1–63; sequence MAQISLTFPD…ETDAKIAIHT (63 aa). The interval 247–544 is catalytic; it reads DHRKLGREME…LIENYAGKLP (298 aa). Zn(2+)-binding residues include Cys344, His395, and His521.

This sequence belongs to the class-II aminoacyl-tRNA synthetase family. In terms of assembly, homodimer. The cofactor is Zn(2+).

It is found in the cytoplasm. The enzyme catalyses tRNA(Thr) + L-threonine + ATP = L-threonyl-tRNA(Thr) + AMP + diphosphate + H(+). Its function is as follows. Catalyzes the attachment of threonine to tRNA(Thr) in a two-step reaction: L-threonine is first activated by ATP to form Thr-AMP and then transferred to the acceptor end of tRNA(Thr). Also edits incorrectly charged L-seryl-tRNA(Thr). This Cereibacter sphaeroides (strain ATCC 17029 / ATH 2.4.9) (Rhodobacter sphaeroides) protein is Threonine--tRNA ligase.